A 228-amino-acid polypeptide reads, in one-letter code: Uracil-DNA glycosylase (228 aa).

D64 serves as the catalytic Proton acceptor.

It belongs to the uracil-DNA glycosylase (UDG) superfamily. UNG family.

Its subcellular location is the cytoplasm. The enzyme catalyses Hydrolyzes single-stranded DNA or mismatched double-stranded DNA and polynucleotides, releasing free uracil.. Functionally, excises uracil residues from the DNA which can arise as a result of misincorporation of dUMP residues by DNA polymerase or due to deamination of cytosine. The chain is Uracil-DNA glycosylase from Yersinia pseudotuberculosis serotype IB (strain PB1/+).